A 248-amino-acid polypeptide reads, in one-letter code: 5'-nucleotidase SurE (248 aa).

Residues aspartate 8, aspartate 9, serine 39, and asparagine 91 each contribute to the a divalent metal cation site.

It belongs to the SurE nucleotidase family. Requires a divalent metal cation as cofactor.

It is found in the cytoplasm. It carries out the reaction a ribonucleoside 5'-phosphate + H2O = a ribonucleoside + phosphate. Its function is as follows. Nucleotidase that shows phosphatase activity on nucleoside 5'-monophosphates. The sequence is that of 5'-nucleotidase SurE from Marinomonas sp. (strain MWYL1).